The following is a 106-amino-acid chain: Large ribosomal subunit protein P1 (106 aa).

A disordered region spans residues 69–106 (AAAAAPAEEAKEEAKEEEEEEEEVKEEEAIEGLGALFG). The segment covering 83-98 (KEEEEEEEEVKEEEAI) has biased composition (acidic residues).

This sequence belongs to the eukaryotic ribosomal protein P1/P2 family. Part of the 50S ribosomal subunit. Homodimer, it forms part of the ribosomal stalk which helps the ribosome interact with GTP-bound translation factors. Forms a heptameric uL10/P0(P1)2(P1)2(P1)2 complex, where uL10/P0 forms an elongated spine to which the P1 dimers bind in a sequential fashion.

Its function is as follows. Forms part of the ribosomal stalk, playing a central role in the interaction of the ribosome with GTP-bound translation factors. In Archaeoglobus fulgidus (strain ATCC 49558 / DSM 4304 / JCM 9628 / NBRC 100126 / VC-16), this protein is Large ribosomal subunit protein P1.